A 103-amino-acid polypeptide reads, in one-letter code: Large ribosomal subunit protein bL21 (103 aa).

Belongs to the bacterial ribosomal protein bL21 family. As to quaternary structure, part of the 50S ribosomal subunit. Contacts protein L20.

Functionally, this protein binds to 23S rRNA in the presence of protein L20. This Bordetella parapertussis (strain 12822 / ATCC BAA-587 / NCTC 13253) protein is Large ribosomal subunit protein bL21.